The primary structure comprises 516 residues: Immunoglobulin G-binding protein A (516 aa).

The N-terminal stretch at 1-36 (MKKKNIYSIRKLGVGIASVTLGTLLISGGVTPAANA) is a signal peptide. The YSIRK-G/S signaling motif signature appears at 7–18 (YSIRKLGVGIAS). An Immunoglobulin-binding region E repeat occupies 37-92 (AQHDEAQQNAFYQVLNMPNLNADQRNGFIQSLKDDPSQSANVLGEAQKLNDSQAPK). An Immunoglobulin-binding region D repeat occupies 93-153 (ADAQQNNFNK…KKLNESQAPK (61 aa)). An Immunoglobulin-binding region A repeat occupies 154–211 (ADNNFNKEQQNAFYEILNMPNLNEEQRNGFIQSLKDDPSQSANLLSEAKKLNESQAPK). The stretch at 212–269 (ADNKFNKEQQNAFYEILHLPNLNEEQRNGFIQSLKDDPSQSANLLAEAKKLNDAQAPK) is one Immunoglobulin-binding region B repeat. Residues 270 to 327 (ADNKFNKEQQNAFYEILHLPNLTEEQRNGFIQSLKDDPSVSKEILAEAKKLNDAQAPK) form an Immunoglobulin-binding region C repeat. A compositionally biased stretch (basic and acidic residues) spans 318 to 420 (KKLNDAQAPK…GNKPGKEDGN (103 aa)). Disordered regions lie at residues 318–440 (KKLN…ANGT) and 467–487 (KKQPANHADANKAQALPETGE). 11 repeat units span residues 333-340 (KPGKEDNN), 341-348 (KPGKEDNN), 349-356 (KPGKEDNN), 357-364 (KPGKEDNN), 365-372 (KPGKEDGN), 373-380 (KPGKEDNK), 381-388 (KPGKEDGN), 389-396 (KPGKEDNK), 397-404 (KPGKEDGN), 405-412 (KPGKEDGN), and 413-420 (KPGKEDGN). The tract at residues 333–420 (KPGKEDNNKP…GNKPGKEDGN (88 aa)) is 11 X 8 AA approximate tandem repeats. One can recognise a LysM domain in the interval 421 to 465 (GVHVVKPGDTVNDIAKANGTTADKIAADNKLADKNMIKPGQELVV). Positions 482–486 (LPETG) match the LPXTG sorting signal motif. Threonine 485 is modified (pentaglycyl murein peptidoglycan amidated threonine). A propeptide spans 486-516 (GEENPFIGTTVFGGLSLALGAALLAGRRREL) (removed by sortase A).

The protein belongs to the immunoglobulin-binding protein SpA family. In terms of assembly, interacts with host TNFRSF1A; this interaction leads to the stimulation of both surface expression and shedding of TNFRSF1A.

It is found in the secreted. It localises to the cell wall. In terms of biological role, plays a role in the inhibition of the host innate and adaptive immune responses. Possesses five immunoglobulin-binding domains that capture both the fragment crystallizable region (Fc region) and the Fab region (part of Ig that identifies antigen) of immunoglobulins. In turn, Staphylococcus aureus is protected from phagocytic killing via inhibition of Ig Fc region. In addition, the host elicited B-cell response is prevented due to a decrease of antibody-secreting cell proliferation that enter the bone marrow, thereby decreasing long-term antibody production. Inhibits osteogenesis by preventing osteoblast proliferation and expression of alkaline phosphatase, type I collagen, osteopontin and osteocalcin. Acts directly as a pro-inflammatory factor in the lung through its ability to bind and activate tumor necrosis factor alpha receptor 1/TNFRSF1A. This is Immunoglobulin G-binding protein A (spa) from Staphylococcus aureus (strain NCTC 8325 / PS 47).